The chain runs to 594 residues: Elongation factor 4 (594 aa).

A tr-type G domain is found at 2–184 (KNIRNFSIIA…TIVAKVPAPE (183 aa)). Residues 14–19 (DHGKST) and 131–134 (NKID) each bind GTP.

The protein belongs to the TRAFAC class translation factor GTPase superfamily. Classic translation factor GTPase family. LepA subfamily.

The protein resides in the cell inner membrane. The enzyme catalyses GTP + H2O = GDP + phosphate + H(+). Functionally, required for accurate and efficient protein synthesis under certain stress conditions. May act as a fidelity factor of the translation reaction, by catalyzing a one-codon backward translocation of tRNAs on improperly translocated ribosomes. Back-translocation proceeds from a post-translocation (POST) complex to a pre-translocation (PRE) complex, thus giving elongation factor G a second chance to translocate the tRNAs correctly. Binds to ribosomes in a GTP-dependent manner. This Francisella philomiragia subsp. philomiragia (strain ATCC 25017 / CCUG 19701 / FSC 153 / O#319-036) protein is Elongation factor 4.